A 300-amino-acid polypeptide reads, in one-letter code: UDP-N-acetylenolpyruvoylglucosamine reductase (300 aa).

The region spanning 27 to 216 (RVGGPADVIF…TERREKTQPI (190 aa)) is the FAD-binding PCMH-type domain. Residue Arg-172 is part of the active site. The active-site Proton donor is the Ser-223. Glu-293 is an active-site residue.

Belongs to the MurB family. It depends on FAD as a cofactor.

Its subcellular location is the cytoplasm. The catalysed reaction is UDP-N-acetyl-alpha-D-muramate + NADP(+) = UDP-N-acetyl-3-O-(1-carboxyvinyl)-alpha-D-glucosamine + NADPH + H(+). Its pathway is cell wall biogenesis; peptidoglycan biosynthesis. Cell wall formation. The sequence is that of UDP-N-acetylenolpyruvoylglucosamine reductase from Phenylobacterium zucineum (strain HLK1).